We begin with the raw amino-acid sequence, 192 residues long: Peptide deformylase (192 aa).

Residues C108 and H150 each coordinate Fe cation. E151 is an active-site residue. A Fe cation-binding site is contributed by H154.

The protein belongs to the polypeptide deformylase family. Requires Fe(2+) as cofactor.

The catalysed reaction is N-terminal N-formyl-L-methionyl-[peptide] + H2O = N-terminal L-methionyl-[peptide] + formate. In terms of biological role, removes the formyl group from the N-terminal Met of newly synthesized proteins. Requires at least a dipeptide for an efficient rate of reaction. N-terminal L-methionine is a prerequisite for activity but the enzyme has broad specificity at other positions. The polypeptide is Peptide deformylase (Opitutus terrae (strain DSM 11246 / JCM 15787 / PB90-1)).